We begin with the raw amino-acid sequence, 589 residues long: Arginine--tRNA ligase (589 aa).

The short motif at 131 to 141 is the 'HIGH' region element; the sequence is ANPTGPLHVGH.

It belongs to the class-I aminoacyl-tRNA synthetase family. Monomer.

The protein localises to the cytoplasm. It catalyses the reaction tRNA(Arg) + L-arginine + ATP = L-arginyl-tRNA(Arg) + AMP + diphosphate. The sequence is that of Arginine--tRNA ligase from Legionella pneumophila (strain Paris).